Here is a 234-residue protein sequence, read N- to C-terminus: Probable transcriptional regulatory protein MYCGA1330 (234 aa).

The protein belongs to the TACO1 family.

The protein localises to the cytoplasm. This is Probable transcriptional regulatory protein MYCGA1330 from Mycoplasmoides gallisepticum (strain R(low / passage 15 / clone 2)) (Mycoplasma gallisepticum).